A 250-amino-acid chain; its full sequence is Thioesterase FPSE_09186 (250 aa).

Belongs to the AMT4 thioesterase family.

Its pathway is secondary metabolite biosynthesis. Functionally, thioesterase; part of the gene cluster that mediates the biosynthesis of the lipopeptides W493 A and B. W493 A and B consist of six amino acid residues D-allo-thr, L-Ala, D-Ala, L-Gln, D-Tyr, and L-Val/L-Ile linked to a 3-hydroxy-4-methyltetradecanoic acid polyketide chain. The biosynthesis starts with formation of the linear polyketide chain by the highly reducing polyketide synthase PKS40. The gene cluster contains a putative acyl-CoA ligase (FPSE_09184) for formation of a CoA thioester polyketide. The thiol bond could be hydrolyzed by the putative thioesterase (FPSE_09186) and then accepted by the first T domain in module 1 of NRPS32. The second T domain is responsible for accepting a threonine, which is adenylated by the A domain and epimerized to the D-allo-threonine formed by the E domain. The five successive modules incorporate Ala, Ala, Gln, Tyr, and Val/Ile into the final product, which is released by cyclization. The protein is Thioesterase FPSE_09186 of Fusarium pseudograminearum (strain CS3096) (Wheat and barley crown-rot fungus).